The sequence spans 427 residues: C4-dicarboxylate TRAP transporter large permease protein DctM (427 aa).

A run of 13 helical transmembrane segments spans residues T2–V22, T55–A75, G91–S111, V115–F135, G138–V158, F171–I191, A216–T236, P237–R257, L274–T294, L310–M330, I335–I355, I359–F379, and A396–V416.

Belongs to the TRAP transporter large permease family. In terms of assembly, the complex comprises the extracytoplasmic solute receptor protein DctP, and the two transmembrane proteins DctQ and DctM.

The protein localises to the cell inner membrane. Functionally, part of the tripartite ATP-independent periplasmic (TRAP) transport system DctPQM involved in C4-dicarboxylates uptake. The polypeptide is C4-dicarboxylate TRAP transporter large permease protein DctM (Pseudomonas aeruginosa (strain ATCC 15692 / DSM 22644 / CIP 104116 / JCM 14847 / LMG 12228 / 1C / PRS 101 / PAO1)).